Consider the following 65-residue polypeptide: Large ribosomal subunit protein bL31 (65 aa).

The Zn(2+) site is built by Cys-16, Cys-18, Cys-36, and Cys-39.

The protein belongs to the bacterial ribosomal protein bL31 family. Type A subfamily. In terms of assembly, part of the 50S ribosomal subunit. The cofactor is Zn(2+).

Functionally, binds the 23S rRNA. This is Large ribosomal subunit protein bL31 from Alkaliphilus metalliredigens (strain QYMF).